A 328-amino-acid polypeptide reads, in one-letter code: Malate dehydrogenase (328 aa).

11 to 17 serves as a coordination point for NAD(+); sequence GAAGQIG. Substrate-binding residues include Arg92 and Arg98. NAD(+) contacts are provided by residues Asn105, Gln112, and 129-131; that span reads TGN. Residues Asn131 and Arg162 each coordinate substrate. His187 serves as the catalytic Proton acceptor.

Belongs to the LDH/MDH superfamily. MDH type 2 family.

It catalyses the reaction (S)-malate + NAD(+) = oxaloacetate + NADH + H(+). Its function is as follows. Catalyzes the reversible oxidation of malate to oxaloacetate. This Paenarthrobacter aurescens (strain TC1) protein is Malate dehydrogenase.